A 336-amino-acid polypeptide reads, in one-letter code: m7GpppX diphosphatase (336 aa).

Residues 1 to 36 are disordered; the sequence is MADTAPQLKRKREQEAEEAETPSTEEKEAGVGNGTS. Ala-2 bears the N-acetylalanine mark. Positions 9-12 match the nuclear localization signal (NLS) motif; sequence KRKR. Ser-23 is modified (phosphoserine). Residues Lys-137 and Lys-141 each carry the N6-acetyllysine modification. Residues 141 to 153 carry the nuclear export sequence (NES) motif; the sequence is KYMRQDLRLIRET. Residues Trp-174, Glu-184, Asp-204, Lys-206, and 267–278 each bind substrate; that span reads HYLPSYYHLHVH. A Histidine triad motif motif is present at residues 274–278; that stretch reads HLHVH. His-276 functions as the Nucleophile in the catalytic mechanism.

Belongs to the HIT family. Homodimer. Associates with components of the exosome multienzyme ribonuclease complex, such as EXOSC3 and EXOSC4. Interacts with NDOR1.

Its subcellular location is the cytoplasm. It localises to the nucleus. It catalyses the reaction a 5'-end (N(7)-methyl 5'-triphosphoguanosine)-ribonucleoside in mRNA + H2O = N(7)-methyl-GMP + a 5'-end diphospho-ribonucleoside in mRNA + 2 H(+). Its activity is regulated as follows. The hydrolytic product 7-methylguanosine diphosphate (m7GDP) efficiently inhibits the decapping scavenger activity and acts as a competitive inhibitor in vitro. Inhibited by 2,4-diaminoquinazoline. Functionally, decapping scavenger enzyme that catalyzes the cleavage of a residual cap structure following the degradation of mRNAs by the 3'-&gt;5' exosome-mediated mRNA decay pathway. Hydrolyzes cap analog structures like 7-methylguanosine nucleoside triphosphate (m7GpppG) with up to 10 nucleotide substrates (small capped oligoribonucleotides) and specifically releases 5'-phosphorylated RNA fragments and 7-methylguanosine monophosphate (m7GMP). Cleaves cap analog structures like tri-methyl guanosine nucleoside triphosphate (m3(2,2,7)GpppG) with very poor efficiency. Does not hydrolyze unmethylated cap analog (GpppG) and shows no decapping activity on intact m7GpppG-capped mRNA molecules longer than 25 nucleotides. Does not hydrolyze 7-methylguanosine diphosphate (m7GDP) to m7GMP. May also play a role in the 5'-&gt;3 mRNA decay pathway; m7GDP, the downstream product released by the 5'-&gt;3' mRNA mediated decapping activity, may be also converted by DCPS to m7GMP. Binds to m7GpppG and strongly to m7GDP. Plays a role in first intron splicing of pre-mRNAs. Inhibits activation-induced cell death. The chain is m7GpppX diphosphatase (Dcps) from Rattus norvegicus (Rat).